Reading from the N-terminus, the 469-residue chain is Probable Xaa-Pro aminopeptidase PEPP (469 aa).

Residues Asp265, Asp276, Glu399, and Glu439 each coordinate Mn(2+).

Belongs to the peptidase M24B family. Requires Mn(2+) as cofactor.

The enzyme catalyses Release of any N-terminal amino acid, including proline, that is linked to proline, even from a dipeptide or tripeptide.. In terms of biological role, catalyzes the removal of a penultimate prolyl residue from the N-termini of peptides. In Coccidioides posadasii (strain RMSCC 757 / Silveira) (Valley fever fungus), this protein is Probable Xaa-Pro aminopeptidase PEPP (PEPP).